The primary structure comprises 754 residues: Elongation factor G-2, mitochondrial (754 aa).

In terms of domain architecture, tr-type G spans 63–340; that stretch reads DKLRNIGISA…GVVSFLPSPN (278 aa). GTP is bound by residues 72 to 79, 139 to 143, and 193 to 196; these read AHIDSGKT, DTPGH, and NKLD.

It belongs to the TRAFAC class translation factor GTPase superfamily. Classic translation factor GTPase family. EF-G/EF-2 subfamily. Expressed in cotyledons and adult leaves at the same levels.

It localises to the mitochondrion. It participates in protein biosynthesis; polypeptide chain elongation. Its function is as follows. Mitochondrial GTPase that catalyzes the GTP-dependent ribosomal translocation step during translation elongation. During this step, the ribosome changes from the pre-translocational (PRE) to the post-translocational (POST) state as the newly formed A-site-bound peptidyl-tRNA and P-site-bound deacylated tRNA move to the P and E sites, respectively. Catalyzes the coordinated movement of the two tRNA molecules, the mRNA and conformational changes in the ribosome. This chain is Elongation factor G-2, mitochondrial (MEFG2), found in Arabidopsis thaliana (Mouse-ear cress).